The following is a 556-amino-acid chain: Glucose-6-phosphate isomerase (556 aa).

Glu-363 (proton donor) is an active-site residue. Active-site residues include His-394 and Lys-522.

The protein belongs to the GPI family.

Its subcellular location is the cytoplasm. The enzyme catalyses alpha-D-glucose 6-phosphate = beta-D-fructose 6-phosphate. It functions in the pathway carbohydrate biosynthesis; gluconeogenesis. Its pathway is carbohydrate degradation; glycolysis; D-glyceraldehyde 3-phosphate and glycerone phosphate from D-glucose: step 2/4. In terms of biological role, catalyzes the reversible isomerization of glucose-6-phosphate to fructose-6-phosphate. In Frankia casuarinae (strain DSM 45818 / CECT 9043 / HFP020203 / CcI3), this protein is Glucose-6-phosphate isomerase.